Consider the following 142-residue polypeptide: MVLSPTDKSNVKATWAKIGNHGAEYGAEALERMFMNFPSTKTYFPHFDLGHDSAQVKGHGKKVADALTKAVGHMDNLLDALSDLSDLHAHKLRVDPANFKLLSHCLLVTLALHLPAEFTPSVHASLDKFLASVSTVLTSKYR.

The region spanning 2 to 142 (VLSPTDKSNV…VSTVLTSKYR (141 aa)) is the Globin domain. Serine 4 is subject to Phosphoserine. 2 positions are modified to N6-succinyllysine: lysine 8 and lysine 12. The residue at position 17 (lysine 17) is an N6-acetyllysine; alternate. Lysine 17 carries the N6-succinyllysine; alternate modification. Tyrosine 25 bears the Phosphotyrosine mark. Residue lysine 41 is modified to N6-succinyllysine. Histidine 59 lines the O2 pocket. Histidine 88 lines the heme b pocket. The residue at position 103 (serine 103) is a Phosphoserine. The residue at position 109 (threonine 109) is a Phosphothreonine. Serine 125 and serine 132 each carry phosphoserine. A phosphothreonine mark is found at threonine 135 and threonine 138. The residue at position 139 (serine 139) is a Phosphoserine.

This sequence belongs to the globin family. In terms of assembly, heterotetramer of two alpha chains and two beta chains. Red blood cells.

Involved in oxygen transport from the lung to the various peripheral tissues. Functionally, hemopressin acts as an antagonist peptide of the cannabinoid receptor CNR1. Hemopressin-binding efficiently blocks cannabinoid receptor CNR1 and subsequent signaling. The polypeptide is Hemoglobin subunit alpha (HBA) (Balaenoptera acutorostrata (Common minke whale)).